The following is a 331-amino-acid chain: MTNRKDDHIKYALDYRSPYNSFDDIELIHHSLPDYDLAEIDLSTHFAGQDFDFPFYINAMTGGSQKGKEVNEKLAQVADTCGLLFVTGSYSTALKNPDDTSYQVKKSRPHLLLATNIGLDKPYQAGLQAVRDLQPLFLQVHINLMQELLMPEGEREFRSWKKHLSDYAKKLQLPFILKEVGFGMDVKTIQTAIDLGVKTVDISGRGGTSFAYIENRRGGNRSYLNQWGQTTAQVLLNAQPLMDKVEILASGGIRHPLDIIKALVLGAKAVGLSRTMLELVEQHSVHEVIAIVNGWKEDLRLIMCALNCQTIAELRNVDYLLYGRLREGQRQ.

Position 4–5 (4–5 (RK)) interacts with substrate. Residues 59-61 (AMT), S89, and N116 each bind FMN. Substrate is bound at residue Q146. Residue E147 participates in Mg(2+) binding. Residues K178, S203, T208, 252–254 (GIR), and 273–274 (SR) contribute to the FMN site.

The protein belongs to the IPP isomerase type 2 family. In terms of assembly, homooctamer. Dimer of tetramers. FMN is required as a cofactor. The cofactor is NADPH. Mg(2+) serves as cofactor.

Its subcellular location is the cytoplasm. It catalyses the reaction isopentenyl diphosphate = dimethylallyl diphosphate. Functionally, involved in the biosynthesis of isoprenoids. Catalyzes the 1,3-allylic rearrangement of the homoallylic substrate isopentenyl (IPP) to its allylic isomer, dimethylallyl diphosphate (DMAPP). The protein is Isopentenyl-diphosphate delta-isomerase of Streptococcus mutans serotype c (strain ATCC 700610 / UA159).